Here is a 295-residue protein sequence, read N- to C-terminus: Vesicle-associated protein 4-2 (295 aa).

The span at 1–10 shows a compositional bias: basic and acidic residues; it reads MTMTEEKPTS. Residues 1–99 are disordered; that stretch reads MTMTEEKPTS…PSPSVSSVAK (99 aa). The span at 31 to 53 shows a compositional bias: low complexity; sequence NAASSAATSPFPSGASSSSTSSH. A compositionally biased stretch (basic residues) spans 54-71; it reads LHNHHQHHHQHHHQHHHQ. Residues 83-98 show a composition bias toward polar residues; the sequence is GQNQHPTPSPSVSSVA. The 123-residue stretch at 107-229 folds into the MSP domain; the sequence is RLKLDPSEKL…KEQILRVIFL (123 aa). The span at 249 to 263 shows a compositional bias: basic and acidic residues; that stretch reads DAAVEARKKPPEETG. Residues 249-270 form a disordered region; it reads DAAVEARKKPPEETGPKMIGEG. S294 is subject to Phosphoserine.

The protein belongs to the VAMP-associated protein (VAP) (TC 9.B.17) family.

In terms of biological role, may play a role in vesicle trafficking. This is Vesicle-associated protein 4-2 (PVA42) from Arabidopsis thaliana (Mouse-ear cress).